Consider the following 451-residue polypeptide: Phosphoglucosamine mutase (451 aa).

The active-site Phosphoserine intermediate is S107. S107, D246, D248, and D250 together coordinate Mg(2+). S107 is modified (phosphoserine).

The protein belongs to the phosphohexose mutase family. Mg(2+) is required as a cofactor. In terms of processing, activated by phosphorylation.

The enzyme catalyses alpha-D-glucosamine 1-phosphate = D-glucosamine 6-phosphate. Its function is as follows. Catalyzes the conversion of glucosamine-6-phosphate to glucosamine-1-phosphate. In Burkholderia lata (strain ATCC 17760 / DSM 23089 / LMG 22485 / NCIMB 9086 / R18194 / 383), this protein is Phosphoglucosamine mutase.